The chain runs to 257 residues: Hydroxyacylglutathione hydrolase (257 aa).

Residues His-54, His-56, Asp-58, His-59, His-113, Asp-137, and His-175 each contribute to the Zn(2+) site.

The protein belongs to the metallo-beta-lactamase superfamily. Glyoxalase II family. Monomer. Zn(2+) serves as cofactor.

The catalysed reaction is an S-(2-hydroxyacyl)glutathione + H2O = a 2-hydroxy carboxylate + glutathione + H(+). It functions in the pathway secondary metabolite metabolism; methylglyoxal degradation; (R)-lactate from methylglyoxal: step 2/2. In terms of biological role, thiolesterase that catalyzes the hydrolysis of S-D-lactoyl-glutathione to form glutathione and D-lactic acid. The sequence is that of Hydroxyacylglutathione hydrolase from Rippkaea orientalis (strain PCC 8801 / RF-1) (Cyanothece sp. (strain PCC 8801)).